The chain runs to 210 residues: 7-methyl-GTP pyrophosphatase (210 aa).

Aspartate 79 acts as the Proton acceptor in catalysis.

It belongs to the Maf family. YceF subfamily. A divalent metal cation is required as a cofactor.

It localises to the cytoplasm. The enzyme catalyses N(7)-methyl-GTP + H2O = N(7)-methyl-GMP + diphosphate + H(+). Its function is as follows. Nucleoside triphosphate pyrophosphatase that hydrolyzes 7-methyl-GTP (m(7)GTP). May have a dual role in cell division arrest and in preventing the incorporation of modified nucleotides into cellular nucleic acids. The protein is 7-methyl-GTP pyrophosphatase of Burkholderia orbicola (strain AU 1054).